The primary structure comprises 511 residues: uncharacterized protein (511 aa).

The disordered stretch occupies residues 59–79 (VPVAANDDQPDGSRQSVRGRQ).

This sequence belongs to the transposase 25 family.

This is an uncharacterized protein from Sinorhizobium fredii (strain NBRC 101917 / NGR234).